The sequence spans 467 residues: MAQAQGKIVQCIGAVVDVEFARDQMPKIYDALKMEGSALTLEVQQQLGDGIVRTIALGTSDGLRRGNTVYNTGANITVPVGKATLGRIMDVLGAPIDERGPVDQTLTAPIHRKAPAYDELSPSQELLETGIKVIDLVCPFAKGGKVGLFGGAGVGKTVNMMELINNIAKAHSGLSVFAGVGERTREGNDFYHEMADSGVVNLENLGESKVAMVYGQMNEPPGNRLRVALTGLTIAESFRDEGRDVLFFVDNIYRYTLAGTEVSALLGRMPSAVGYQPTLAEEMGRLQERITSTKVGSITSIQAVYVPADDLTDPSPATTFAHLDSTVVLSRDIASLGIYPAVDPLDSTSRQLDPNVVGEDHYATARAVQGTLQRYKELRDIIAILGMDELAPEDKLAVARARKIQRFLSQPFHVAEVFTGSPGKYVSLAETIRGFKMIVAGECDHLPEQAFYMVGTIDEAFEKAKKV.

ATP is bound at residue Gly-150–Thr-157.

Belongs to the ATPase alpha/beta chains family. F-type ATPases have 2 components, CF(1) - the catalytic core - and CF(0) - the membrane proton channel. CF(1) has five subunits: alpha(3), beta(3), gamma(1), delta(1), epsilon(1). CF(0) has three main subunits: a(1), b(2) and c(9-12). The alpha and beta chains form an alternating ring which encloses part of the gamma chain. CF(1) is attached to CF(0) by a central stalk formed by the gamma and epsilon chains, while a peripheral stalk is formed by the delta and b chains.

It localises to the cell inner membrane. It catalyses the reaction ATP + H2O + 4 H(+)(in) = ADP + phosphate + 5 H(+)(out). Its function is as follows. Produces ATP from ADP in the presence of a proton gradient across the membrane. The catalytic sites are hosted primarily by the beta subunits. The sequence is that of ATP synthase subunit beta from Polaromonas sp. (strain JS666 / ATCC BAA-500).